The following is a 188-amino-acid chain: Vascular endothelial growth factor A-A (188 aa).

The signal sequence occupies residues 1-23; sequence MNLVVYLIQLFLAALLHLSAVKA. 3 disulfide bridges follow: Cys-49–Cys-91, Cys-80–Cys-125, and Cys-84–Cys-127. Asn-98 is a glycosylation site (N-linked (GlcNAc...) asparagine).

The protein belongs to the PDGF/VEGF growth factor family. In terms of assembly, homodimer; disulfide-linked. Isoform VEGF165 binds kdr and kdrl. In terms of tissue distribution, predominantly expressed in regions associated with active vascularization. From 15-16 hours post-fertilization (hpf), expressed in the anterior forebrain, the mesoderm underlying and lateral to the anterior hindbrain, the mesoderm underlying and lateral to the posterior hindbrain, and in the ventral medial portions of the somites. By 30-36 hpf, expression in the somites is decreased, while strong expression is observed in the region of the developing glomeruli and in the anterior portion of the pronephric ducts, the pharyngeal arches, and the brain. By 72 hpf, expression remains only in the pronephros region.

It is found in the secreted. In terms of biological role, growth factor active in angiogenesis, vasculogenesis and endothelial cell growth. Induces endothelial cell proliferation, promotes cell migration, inhibits apoptosis, and induces permeabilization of blood vessels. Required for intersegmental vessel development in the tail during embryogenesis. Acts both upstream of kdr and tie1 to stimulate endothelial cell differentiation, and upstream of gata1 to stimulate hematopoietic cell differentiation. The protein is Vascular endothelial growth factor A-A (vegfaa) of Danio rerio (Zebrafish).